The following is a 453-amino-acid chain: DNA repair protein RadA (453 aa).

A C4-type zinc finger spans residues 10 to 27 (CQECGYQSPKYLGRCPNC). 95 to 102 (GDPGIGKS) contacts ATP. The short motif at 251–255 (KNRFG) is the RadA KNRFG motif element. The interval 350–453 (DAYLKSAGGV…VGQVLKAVFS (104 aa)) is lon-protease-like.

The protein belongs to the RecA family. RadA subfamily.

Functionally, DNA-dependent ATPase involved in processing of recombination intermediates, plays a role in repairing DNA breaks. Stimulates the branch migration of RecA-mediated strand transfer reactions, allowing the 3' invading strand to extend heteroduplex DNA faster. Binds ssDNA in the presence of ADP but not other nucleotides, has ATPase activity that is stimulated by ssDNA and various branched DNA structures, but inhibited by SSB. Does not have RecA's homology-searching function. This is DNA repair protein RadA from Streptococcus pyogenes serotype M3 (strain ATCC BAA-595 / MGAS315).